A 280-amino-acid polypeptide reads, in one-letter code: Extracellular metalloprotease GLRG_06286 (280 aa).

Residues 1–17 form the signal peptide; the sequence is MQVTFTLVAALAGMASA. Residue asparagine 51 is glycosylated (N-linked (GlcNAc...) asparagine). Zn(2+) is bound at residue histidine 196. Glutamate 197 is a catalytic residue. Zn(2+) is bound at residue histidine 200. Residues 217-236 form a disordered region; the sequence is DSIADTPAQSSPSSGCPVGR. An intrachain disulfide couples cysteine 232 to cysteine 259.

Belongs to the peptidase M43B family.

Its subcellular location is the secreted. In terms of biological role, secreted metalloproteinase that allows assimilation of proteinaceous substrates. This chain is Extracellular metalloprotease GLRG_06286, found in Colletotrichum graminicola (strain M1.001 / M2 / FGSC 10212) (Maize anthracnose fungus).